The chain runs to 942 residues: tRNAse Z TRZ4, mitochondrial (942 aa).

A mitochondrion-targeting transit peptide spans 1–50 (MLTSSMPQNLSLFGFSPLKSSSFALILRPFSLYPPIFASSSPAPSRRPPR). The disordered stretch occupies residues 38 to 85 (ASSSPAPSRRPPRTAGYRRSGPSPPRRKWSSFEEQKRKGRSPMEKDKA). Positions 67-85 (SSFEEQKRKGRSPMEKDKA) are enriched in basic and acidic residues.

The protein belongs to the RNase Z family. In terms of assembly, homodimer. Zn(2+) is required as a cofactor. It depends on Ca(2+) as a cofactor. The cofactor is Mn(2+). Requires Mg(2+) as cofactor.

It localises to the mitochondrion. It catalyses the reaction Endonucleolytic cleavage of RNA, removing extra 3' nucleotides from tRNA precursor, generating 3' termini of tRNAs. A 3'-hydroxy group is left at the tRNA terminus and a 5'-phosphoryl group is left at the trailer molecule.. Functionally, zinc phosphodiesterase, which displays tRNA 3'-processing endonuclease activity. Involved in tRNA maturation, by removing a 3'-trailer from precursor tRNA. Can process the mitochondrial tRNA-like structures (t-elements). This chain is tRNAse Z TRZ4, mitochondrial, found in Arabidopsis thaliana (Mouse-ear cress).